The following is a 458-amino-acid chain: Retinoic acid receptor alpha (458 aa).

The modulating stretch occupies residues 1–87 (MSSKDNTCPP…PPPLPRIYKP (87 aa)). The segment at 39–78 (GGLPGVQHQPPLSGYSTPSPATIETQSTSSEEIVPSPPTP) is disordered. Residues 52 to 69 (GYSTPSPATIETQSTSSE) are compositionally biased toward polar residues. 2 NR C4-type zinc fingers span residues 88–108 (CFVC…CEGC) and 124–148 (CHRD…LQKC). The segment at residues 88 to 153 (CFVCQDKSSG…RLQKCFEVGM (66 aa)) is a DNA-binding region (nuclear receptor). Residues 154–182 (SKESVRNDRNKKKKESPKPEAIESYILSP) are hinge. Residues 183 to 417 (ETQDLIEKVQ…LIQEMLENSE (235 aa)) enclose the NR LBD domain. The short motif at 407-415 (PLIQEMLEN) is the 9aaTAD element. Residues 419-458 (LDTLGGGASSDAPVTPVAPGSCSPSLSPSSTHSSPSTHSP) are disordered. The span at 439 to 458 (SCSPSLSPSSTHSSPSTHSP) shows a compositional bias: low complexity.

Belongs to the nuclear hormone receptor family. NR1 subfamily. As to quaternary structure, heterodimer; with an rxr molecule. Binds DNA preferentially as a rar/rxr heterodimer.

The protein localises to the nucleus. Its function is as follows. Receptor for retinoic acid. Retinoic acid receptors bind as heterodimers to their target response elements in response to their ligands, all-trans or 9-cis retinoic acid, and regulate gene expression in various biological processes. The rar/rxr heterodimers bind to the retinoic acid response elements (RARE) composed of tandem 5'-AGGTCA-3' sites known as DR1-DR5. Required for primary neurogenesis and for anteroposterior neural patterning. This Xenopus laevis (African clawed frog) protein is Retinoic acid receptor alpha (rara).